A 296-amino-acid polypeptide reads, in one-letter code: tRNA dimethylallyltransferase (296 aa).

2 to 9 contacts ATP; sequence GPTASGKT. 4–9 is a substrate binding site; it reads TASGKT. Interaction with substrate tRNA stretches follow at residues 27–30, 151–155, and 232–237; these read DSAL, QRLSR, and RCVGYR.

Belongs to the IPP transferase family. Monomer. Requires Mg(2+) as cofactor.

It catalyses the reaction adenosine(37) in tRNA + dimethylallyl diphosphate = N(6)-dimethylallyladenosine(37) in tRNA + diphosphate. In terms of biological role, catalyzes the transfer of a dimethylallyl group onto the adenine at position 37 in tRNAs that read codons beginning with uridine, leading to the formation of N6-(dimethylallyl)adenosine (i(6)A). This chain is tRNA dimethylallyltransferase, found in Shewanella sp. (strain MR-4).